The chain runs to 412 residues: COP9 signalosome complex subunit 4 (412 aa).

The 163-residue stretch at 216–378 folds into the PCI domain; sequence EAAQRYYELS…GILHFEDSNP (163 aa).

This sequence belongs to the CSN4 family. Component of the CSN complex, probably composed of csn-1, csn-2, csn-3, csn-4, csn-5, csn-6 and csn-7. Within the complex it probably interacts directly with csn-2 and csn-4. In the complex, it probably interacts directly with csn-1, csn-2, csn-3 and csn-6. Interacts with itself.

Its subcellular location is the cytoplasm. The protein resides in the nucleus. Functionally, component of the COP9 signalosome complex (CSN), a complex involved in various cellular and developmental processes. The CSN complex is an essential regulator of the ubiquitin (Ubl) conjugation pathway by mediating the deneddylation of the cullin subunits of the SCF-type E3 ligase complexes, leading to decrease the Ubl ligase activity of SCF. The CSN complex plays an essential role in embryogenesis and oogenesis and is required to regulate microtubule stability in the early embryo. Mediates mei-3/katanin targeting for degradation at the meiosis to mitosis transition via deneddylation of cul-3. This chain is COP9 signalosome complex subunit 4 (csn-4), found in Caenorhabditis elegans.